The following is a 539-amino-acid chain: Phosphoenolpyruvate carboxykinase (ATP) (539 aa).

Substrate-binding residues include arginine 64, tyrosine 206, and lysine 212. ATP contacts are provided by residues lysine 212, histidine 231, and 247–255 (GLSGTGKTT). Residues lysine 212 and histidine 231 each contribute to the Mn(2+) site. A Mn(2+)-binding site is contributed by aspartate 268. Residues glutamate 296, arginine 332, 448-449 (RI), and threonine 454 contribute to the ATP site. Substrate is bound at residue arginine 332.

This sequence belongs to the phosphoenolpyruvate carboxykinase (ATP) family. As to quaternary structure, monomer. The cofactor is Mn(2+).

It localises to the cytoplasm. It carries out the reaction oxaloacetate + ATP = phosphoenolpyruvate + ADP + CO2. It participates in carbohydrate biosynthesis; gluconeogenesis. Functionally, involved in the gluconeogenesis. Catalyzes the conversion of oxaloacetate (OAA) to phosphoenolpyruvate (PEP) through direct phosphoryl transfer between the nucleoside triphosphate and OAA. This Yersinia pestis bv. Antiqua (strain Antiqua) protein is Phosphoenolpyruvate carboxykinase (ATP).